The primary structure comprises 118 residues: Cell division protein FtsB (118 aa).

Over 1–3 (MRL) the chain is Cytoplasmic. The chain crosses the membrane as a helical span at residues 4–21 (LFLVLLVLLGLIQYPLWL). The Periplasmic portion of the chain corresponds to 22 to 118 (GKGGWFKVWD…PRPPATPPRR (97 aa)). Positions 28-62 (KVWDLQRQVAEQRETNDGLRARNTALEAEVRDLAT) form a coiled coil. The disordered stretch occupies residues 88–118 (LPPGTPLPSDNSTPQASALSKPRPPATPPRR). Residues 95 to 105 (PSDNSTPQASA) are compositionally biased toward polar residues. Pro residues predominate over residues 109–118 (PRPPATPPRR).

This sequence belongs to the FtsB family. As to quaternary structure, part of a complex composed of FtsB, FtsL and FtsQ.

It localises to the cell inner membrane. Its function is as follows. Essential cell division protein. May link together the upstream cell division proteins, which are predominantly cytoplasmic, with the downstream cell division proteins, which are predominantly periplasmic. The sequence is that of Cell division protein FtsB from Bordetella bronchiseptica (strain ATCC BAA-588 / NCTC 13252 / RB50) (Alcaligenes bronchisepticus).